A 303-amino-acid chain; its full sequence is Movement protein (303 aa).

A compositionally biased stretch (polar residues) spans 1–18 (MSNIVSPFSGSSRTTSDV). Disordered regions lie at residues 1–24 (MSNI…QAGG) and 267–303 (EESE…LRIK).

It belongs to the bromovirus movement protein family. In terms of processing, phosphorylated by host.

The protein resides in the host cell junction. Its subcellular location is the host plasmodesma. Transports viral genome to neighboring plant cells directly through plasmosdesmata, without any budding. The movement protein allows efficient cell to cell propagation, by bypassing the host cell wall barrier. Acts by forming a tubular structure at the host plasmodesmata, enlarging it enough to allow free passage of virion capsids. This chain is Movement protein, found in Brome mosaic virus (BMV).